The chain runs to 454 residues: Tol-Pal system protein TolB (454 aa).

Positions 1-30 (MNDARSITRRRFMTLTGSGLAMLGGGHAFA) are cleaved as a signal peptide.

The protein belongs to the TolB family. The Tol-Pal system is composed of five core proteins: the inner membrane proteins TolA, TolQ and TolR, the periplasmic protein TolB and the outer membrane protein Pal. They form a network linking the inner and outer membranes and the peptidoglycan layer.

It is found in the periplasm. In terms of biological role, part of the Tol-Pal system, which plays a role in outer membrane invagination during cell division and is important for maintaining outer membrane integrity. This chain is Tol-Pal system protein TolB, found in Bradyrhizobium diazoefficiens (strain JCM 10833 / BCRC 13528 / IAM 13628 / NBRC 14792 / USDA 110).